The sequence spans 1021 residues: Sodium/potassium-transporting ATPase subunit alpha-1 (1021 aa).

A propeptide spanning residues 1–5 (MGKGA) is cleaved from the precursor. Residues 1-11 (MGKGAGRDKYE) are compositionally biased toward basic and acidic residues. The segment at 1 to 31 (MGKGAGRDKYEPTATSEHGTKKKKAKERDMD) is disordered. The Cytoplasmic portion of the chain corresponds to 6-85 (GRDKYEPTAT…NTLTPPPTTP (80 aa)). Phosphotyrosine is present on tyrosine 10. The residue at position 16 (serine 16) is a Phosphoserine; by PKC. The tract at residues 80–82 (PPP) is phosphoinositide-3 kinase binding. The helical transmembrane segment at 86 to 106 (EWVKFCRQLFGGFSLLLWIGS) threads the bilayer. Over 107 to 129 (LLCFLAYGITSVMEGEPNSDNLY) the chain is Extracellular. The helical transmembrane segment at 130 to 150 (LGVVLAAVVIITGCFSYYQEA) threads the bilayer. At 151-286 (KSSKIMESFK…GGKTPIAMEI (136 aa)) the chain is on the cytoplasmic side. The tract at residues 214 to 233 (SSLTGESEPQTRSPDFSNEN) is disordered. Residues 287-306 (EHFIHLITGVAVFLGVSFFI) traverse the membrane as a helical segment. Residues 307-318 (LSLILEYTWLEA) lie on the Extracellular side of the membrane. A helical transmembrane segment spans residues 319-336 (VIFLIGIIVANVPEGLLA). Residues 337 to 770 (TVTVCLTLTA…EEGRLIFDNL (434 aa)) are Cytoplasmic-facing. Aspartate 374 acts as the 4-aspartylphosphate intermediate in catalysis. Lysine 485 is a binding site for ATP. Residues aspartate 715 and aspartate 719 each coordinate Mg(2+). The chain crosses the membrane as a helical span at residues 771-790 (KKSIAYTLTSNIPEITPFLI). The Extracellular portion of the chain corresponds to 791 to 800 (FIIANIPLPL). The chain crosses the membrane as a helical span at residues 801–821 (GTCTILCIDLGTDMVPAISLA). Residues 822–841 (YEQAESDIMKRQPRNPKTDK) are Cytoplasmic-facing. Residues 842 to 864 (LVNERLISMAYGQIGMIQALGGF) form a helical membrane-spanning segment. At 865–916 (FTYFVIMAENGFLPSGLVGIRLQWDDRWINDVEDSYGQQWTFEQRKIVEFTC) the chain is on the extracellular side. The chain crosses the membrane as a helical span at residues 917-936 (HTAFFVSIVVVQWADLIICK). Topologically, residues 937 to 949 (TRRNSVFQQGMKN) are cytoplasmic. Serine 941 carries the post-translational modification Phosphoserine; by PKA. The helical transmembrane segment at 950–968 (KILIFGLFEETALAAFLSY) threads the bilayer. At 969–983 (CPGMDVALRMYPLKP) the chain is on the extracellular side. The chain crosses the membrane as a helical span at residues 984-1004 (TWWFCAFPYSLLIFLYDEIRK). Over 1005–1021 (LIIRRNPGGWVERETYY) the chain is Cytoplasmic.

Belongs to the cation transport ATPase (P-type) (TC 3.A.3) family. Type IIC subfamily. The sodium/potassium-transporting ATPase is composed of a catalytic alpha subunit, an auxiliary non-catalytic beta subunit and an additional regulatory subunit. Post-translationally, phosphorylation on Tyr-10 modulates pumping activity.

The protein localises to the cell membrane. The protein resides in the sarcolemma. The catalysed reaction is K(+)(out) + Na(+)(in) + ATP + H2O = K(+)(in) + Na(+)(out) + ADP + phosphate + H(+). This is the catalytic component of the active enzyme, which catalyzes the hydrolysis of ATP coupled with the exchange of sodium and potassium ions across the plasma membrane. This action creates the electrochemical gradient of sodium and potassium ions, providing the energy for active transport of various nutrients. This Gallus gallus (Chicken) protein is Sodium/potassium-transporting ATPase subunit alpha-1 (ATP1A1).